A 438-amino-acid chain; its full sequence is Ribosomal protein uS12 methylthiotransferase RimO (438 aa).

Residues 4–120 form the MTTase N-terminal domain; the sequence is HSLFLLSLGC…ILASLGARYR (117 aa). Residues C13, C49, C83, C144, C148, and C151 each contribute to the [4Fe-4S] cluster site. A Radical SAM core domain is found at 130–359; the sequence is LTPSHYAYLK…MELQEAVAES (230 aa). In terms of domain architecture, TRAM spans 362–429; that stretch reads REFEGKEIEV…AHELYGEIVQ (68 aa).

The protein belongs to the methylthiotransferase family. RimO subfamily. [4Fe-4S] cluster serves as cofactor.

It is found in the cytoplasm. The catalysed reaction is L-aspartate(89)-[ribosomal protein uS12]-hydrogen + (sulfur carrier)-SH + AH2 + 2 S-adenosyl-L-methionine = 3-methylsulfanyl-L-aspartate(89)-[ribosomal protein uS12]-hydrogen + (sulfur carrier)-H + 5'-deoxyadenosine + L-methionine + A + S-adenosyl-L-homocysteine + 2 H(+). In terms of biological role, catalyzes the methylthiolation of an aspartic acid residue of ribosomal protein uS12. This is Ribosomal protein uS12 methylthiotransferase RimO from Chlorobium chlorochromatii (strain CaD3).